We begin with the raw amino-acid sequence, 109 residues long: Oncomodulin-1 (109 aa).

Ser2 carries the N-acetylserine modification. 2 EF-hand domains span residues 39 to 74 and 78 to 109; these read MSAN…FESG and LTES…MVHS. Positions 52, 54, 56, 58, 63, 91, 93, 95, 97, and 102 each coordinate Ca(2+).

Belongs to the parvalbumin family.

Functionally, has some calmodulin-like activity with respect to enzyme activation and growth regulation. Binds two calcium ions. The polypeptide is Oncomodulin-1 (OCM) (Homo sapiens (Human)).